Here is a 134-residue protein sequence, read N- to C-terminus: Fluoride-specific ion channel FluC (134 aa).

4 helical membrane-spanning segments follow: residues 7 to 27, 38 to 58, 69 to 89, and 110 to 130; these read LAVA…TIMA, GTLL…IVLV, LFLF…AAES, and VGSL…LLGH. Na(+) is bound by residues Gly77 and Thr80.

The protein belongs to the fluoride channel Fluc/FEX (TC 1.A.43) family.

Its subcellular location is the cell inner membrane. The enzyme catalyses fluoride(in) = fluoride(out). Its activity is regulated as follows. Na(+) is not transported, but it plays an essential structural role and its presence is essential for fluoride channel function. Functionally, fluoride-specific ion channel. Important for reducing fluoride concentration in the cell, thus reducing its toxicity. The protein is Fluoride-specific ion channel FluC of Legionella pneumophila (strain Lens).